The sequence spans 309 residues: tRNA dimethylallyltransferase (309 aa).

Residue 9-16 (GPTAIGKT) participates in ATP binding. Residue 11 to 16 (TAIGKT) participates in substrate binding. 2 interaction with substrate tRNA regions span residues 34–37 (DSRQ) and 164–168 (QRMMR).

This sequence belongs to the IPP transferase family. In terms of assembly, monomer. The cofactor is Mg(2+).

It carries out the reaction adenosine(37) in tRNA + dimethylallyl diphosphate = N(6)-dimethylallyladenosine(37) in tRNA + diphosphate. Catalyzes the transfer of a dimethylallyl group onto the adenine at position 37 in tRNAs that read codons beginning with uridine, leading to the formation of N6-(dimethylallyl)adenosine (i(6)A). This is tRNA dimethylallyltransferase from Flavobacterium johnsoniae (strain ATCC 17061 / DSM 2064 / JCM 8514 / BCRC 14874 / CCUG 350202 / NBRC 14942 / NCIMB 11054 / UW101) (Cytophaga johnsonae).